The following is a 269-amino-acid chain: 4-hydroxy-tetrahydrodipicolinate reductase (269 aa).

NAD(+) contacts are provided by residues 11 to 16 (GASGRM) and glutamate 37. Arginine 38 provides a ligand contact to NADP(+). NAD(+) is bound by residues 101–103 (GTT) and 125–128 (AGNM). The Proton donor/acceptor role is filled by histidine 158. (S)-2,3,4,5-tetrahydrodipicolinate is bound at residue histidine 159. The Proton donor role is filled by lysine 162. 168 to 169 (GT) contributes to the (S)-2,3,4,5-tetrahydrodipicolinate binding site.

The protein belongs to the DapB family.

Its subcellular location is the cytoplasm. It carries out the reaction (S)-2,3,4,5-tetrahydrodipicolinate + NAD(+) + H2O = (2S,4S)-4-hydroxy-2,3,4,5-tetrahydrodipicolinate + NADH + H(+). The enzyme catalyses (S)-2,3,4,5-tetrahydrodipicolinate + NADP(+) + H2O = (2S,4S)-4-hydroxy-2,3,4,5-tetrahydrodipicolinate + NADPH + H(+). It participates in amino-acid biosynthesis; L-lysine biosynthesis via DAP pathway; (S)-tetrahydrodipicolinate from L-aspartate: step 4/4. In terms of biological role, catalyzes the conversion of 4-hydroxy-tetrahydrodipicolinate (HTPA) to tetrahydrodipicolinate. The sequence is that of 4-hydroxy-tetrahydrodipicolinate reductase from Cereibacter sphaeroides (strain KD131 / KCTC 12085) (Rhodobacter sphaeroides).